The chain runs to 595 residues: MKMSTMFGATLHTAPGRSESEGHQLLQRAAMLRQVGQGIFAYLPLGWRTIRKIEAVLRAELERVGGQEVSMPVVNPAELWKQTGRYFTIGPELARFRDRRGRDLVLAMTHEELVTFLGRSEIESYRHLPRMVFQLQTKFRDDPRPRAGLIRVREFVMKDAYSFDVDAAGLAARYRAQYQAYLTIFRRCGLPVAAVLSDVGMMGGSLAHEFVYLTPIGEDTLLICDSCGFAANREAATFGKPAPSTAPWAELAEIATPGATTIEALTAALGVPAAETAKAIFLAASREDRDQTVDTEFILAVVRGDMEANETKIGNLVQAAELRPMTVEEISKIGAVAGYGSPVGVTGVTVVVDELVAASTNLVAGANREGMHLRNVNVGRDFVADHTGDITAARAGDACAECGSELRTARGVEVGQIFKLGTRYSTALGAEYLDADGQRKPLTMGCYGIGVGRLLACLAEEHRDERGLRLPVTIAPYQVHLTLLDDLASAAGELARRVYDELWAAGVEVLFDDRDERAGVKFADADVIGLPLRVTIGRRSVANGAAEVRDRATGVTAQVPFDEVVAELVRRIAALRADIDATVVPVELPAEVFAP.

Residues 1–22 form a disordered region; the sequence is MKMSTMFGATLHTAPGRSESEG.

The protein belongs to the class-II aminoacyl-tRNA synthetase family. ProS type 1 subfamily. Homodimer.

The protein resides in the cytoplasm. The enzyme catalyses tRNA(Pro) + L-proline + ATP = L-prolyl-tRNA(Pro) + AMP + diphosphate. Functionally, catalyzes the attachment of proline to tRNA(Pro) in a two-step reaction: proline is first activated by ATP to form Pro-AMP and then transferred to the acceptor end of tRNA(Pro). As ProRS can inadvertently accommodate and process non-cognate amino acids such as alanine and cysteine, to avoid such errors it has two additional distinct editing activities against alanine. One activity is designated as 'pretransfer' editing and involves the tRNA(Pro)-independent hydrolysis of activated Ala-AMP. The other activity is designated 'posttransfer' editing and involves deacylation of mischarged Ala-tRNA(Pro). The misacylated Cys-tRNA(Pro) is not edited by ProRS. The sequence is that of Proline--tRNA ligase from Salinispora tropica (strain ATCC BAA-916 / DSM 44818 / JCM 13857 / NBRC 105044 / CNB-440).